We begin with the raw amino-acid sequence, 885 residues long: MLIELQQIVKSGLVRNGAKHCTKRSLLCSNASVIASKRFQGSFAPGQQQPLNPLAKPIEQDRDAIIRILSSIGSRREVEQYLRYFTSFEAQRFAIIKVGGAIITDELDTLAQSLAFLNHVGLYPIVVHGAGPQLNKILASRNVEPEYSDGIRITDAETLSVARKVFLEENAKLVDALEKLGTRARPITGGVFQAEYLDKEKYKYVGKIVKVNKAPIEHSIRAGTLPILTSMAETASGQLLNVNADITAGELARVLKPLKVVYLNEKGGLINGETKKKISSIYLDREYDGLMKQPWVKYGTKLKIKEIKELLDTLPRTSSVAIISTKDLQKELFTESGAGTLISRGFVINKHDSLDSIPDAALENLIIQKNSLAAPSESLKQFKDTLKDRKLRIYSDSFNESVAIVDTTDSSLPVLLAFGAADNNWLNNVVDSILTTLKADFPSLLWRLQPSAKNLEWFFSKSEGTLFANNFYYFWYGVKDLNKISKFIQSDKPFADAIIQTQSTKPPTASSTTNNPSSSQINQKRSYSTSSLFSKNKKMNRSLFLKGGKRFFSAEAQKTQKPLKAVSSKPAKVVLLGARGYTGKNLIGLINTHPYLELSHVSSRELEGTKLPGYTKKEIQYVNLSTDDVKKLEEEGAVDAWVMALPNGVCKPYVDALTSANGKSVIVDLSADYRFEPSWQYGLPELNDREALRNSKRISNPGCYATGSQVGLTPILSLIDGQPSIFGVSGYSGAGTKPSPKNDLNVLTNNLIPYSLTDHIHEREISYRLKQPVAFIPHVAQWFQGITLTINVPLKKSITSRELRNLYQDRYNGEPLIHVQGDVPLVKDNAHKHHVSVGGFGVHSSGKRAVIVVTIDNLLKGAATQALQNLNLSCGYDEYAGIHLD.

The N-terminal 59 residues, 1 to 59, are a transit peptide targeting the mitochondrion; the sequence is MLIELQQIVKSGLVRNGAKHCTKRSLLCSNASVIASKRFQGSFAPGQQQPLNPLAKPIE. One can recognise an N-acetyltransferase domain in the interval 346 to 499; it reads FVINKHDSLD…SDKPFADAII (154 aa). Over residues 503–523 the composition is skewed to low complexity; that stretch reads STKPPTASSTTNNPSSSQINQ. Positions 503-532 are disordered; that stretch reads STKPPTASSTTNNPSSSQINQKRSYSTSSL. Cys-703 is an active-site residue.

It in the N-terminal section; belongs to the acetylglutamate kinase family. In the C-terminal section; belongs to the NAGSA dehydrogenase family. Post-translationally, the protein precursor is probably cleaved into the two biologically active enzymes, the kinase and the reductase.

Its subcellular location is the mitochondrion. It catalyses the reaction N-acetyl-L-glutamate 5-semialdehyde + phosphate + NADP(+) = N-acetyl-L-glutamyl 5-phosphate + NADPH + H(+). The enzyme catalyses N-acetyl-L-glutamate + ATP = N-acetyl-L-glutamyl 5-phosphate + ADP. It participates in amino-acid biosynthesis; L-arginine biosynthesis; N(2)-acetyl-L-ornithine from L-glutamate: step 2/4. The protein operates within amino-acid biosynthesis; L-arginine biosynthesis; N(2)-acetyl-L-ornithine from L-glutamate: step 3/4. The kinase activity is inhibited by arginine. The protein is Protein arg11, mitochondrial (arg11) of Schizosaccharomyces pombe (strain 972 / ATCC 24843) (Fission yeast).